Reading from the N-terminus, the 970-residue chain is Protein bicaudal C homolog 1-B (970 aa).

The tract at residues 1-50 (MAAQCGGYMNQSDPGSNSERSADSPLPGSEDDSPGSAAPHDPEWREERFR) is disordered. Positions 9-19 (MNQSDPGSNSE) are enriched in polar residues. Residues 40–50 (HDPEWREERFR) show a composition bias toward basic and acidic residues. KH domains lie at 130–197 (RVTL…RVRI) and 282–346 (PVST…RQYL). The segment covering 596–605 (EASRQSNNHS) has biased composition (polar residues). 3 disordered regions span residues 596–638 (EASR…SANT), 677–696 (SDSE…APGS), and 773–841 (RRAN…NKSA). The span at 606–616 (SAEEVNSKTDS) shows a compositional bias: basic and acidic residues. 2 stretches are compositionally biased toward polar residues: residues 783 to 810 (TMST…GSDS) and 819 to 831 (IDSS…SSIG). The SAM domain occupies 869-932 (FKGSDLPELF…LLAISELNKN (64 aa)).

The protein belongs to the BicC family.

In terms of biological role, putative RNA-binding protein. May be involved in regulating gene expression during embryonic development. Seems to be involved in endoderm formation. Ectopic expression results in endoderm formation in the absence of mesoderm induction. The chain is Protein bicaudal C homolog 1-B (bicc1-b) from Xenopus laevis (African clawed frog).